A 440-amino-acid polypeptide reads, in one-letter code: Xaa-Pro dipeptidase (440 aa).

Positions 244, 255, 335, 380, and 419 each coordinate Mn(2+).

It belongs to the peptidase M24B family. Bacterial-type prolidase subfamily. It depends on Mn(2+) as a cofactor.

It catalyses the reaction Xaa-L-Pro dipeptide + H2O = an L-alpha-amino acid + L-proline. Functionally, splits dipeptides with a prolyl residue in the C-terminal position. This Shewanella putrefaciens (strain CN-32 / ATCC BAA-453) protein is Xaa-Pro dipeptidase.